A 344-amino-acid polypeptide reads, in one-letter code: Phosphoribosylformylglycinamidine cyclo-ligase (344 aa).

The protein belongs to the AIR synthase family.

It is found in the cytoplasm. The enzyme catalyses 2-formamido-N(1)-(5-O-phospho-beta-D-ribosyl)acetamidine + ATP = 5-amino-1-(5-phospho-beta-D-ribosyl)imidazole + ADP + phosphate + H(+). Its pathway is purine metabolism; IMP biosynthesis via de novo pathway; 5-amino-1-(5-phospho-D-ribosyl)imidazole from N(2)-formyl-N(1)-(5-phospho-D-ribosyl)glycinamide: step 2/2. The protein is Phosphoribosylformylglycinamidine cyclo-ligase of Neisseria meningitidis serogroup B (strain ATCC BAA-335 / MC58).